Consider the following 95-residue polypeptide: Putative pterin-4-alpha-carbinolamine dehydratase (95 aa).

This sequence belongs to the pterin-4-alpha-carbinolamine dehydratase family.

It carries out the reaction (4aS,6R)-4a-hydroxy-L-erythro-5,6,7,8-tetrahydrobiopterin = (6R)-L-erythro-6,7-dihydrobiopterin + H2O. The protein is Putative pterin-4-alpha-carbinolamine dehydratase of Solibacter usitatus (strain Ellin6076).